Reading from the N-terminus, the 215-residue chain is tRNA (guanine-N(7)-)-methyltransferase (215 aa).

Glu-44, Glu-69, Asp-96, and Asp-118 together coordinate S-adenosyl-L-methionine. Asp-118 is a catalytic residue. A substrate-binding site is contributed by Lys-122. Residues 124–129 (RHEKRR) form an interaction with RNA region. Residues Asp-154 and 192–195 (TEYE) each bind substrate.

It belongs to the class I-like SAM-binding methyltransferase superfamily. TrmB family.

The catalysed reaction is guanosine(46) in tRNA + S-adenosyl-L-methionine = N(7)-methylguanosine(46) in tRNA + S-adenosyl-L-homocysteine. It functions in the pathway tRNA modification; N(7)-methylguanine-tRNA biosynthesis. Functionally, catalyzes the formation of N(7)-methylguanine at position 46 (m7G46) in tRNA. This Limosilactobacillus fermentum (strain NBRC 3956 / LMG 18251) (Lactobacillus fermentum) protein is tRNA (guanine-N(7)-)-methyltransferase.